Here is a 1097-residue protein sequence, read N- to C-terminus: Protein STICHEL-like 3 (1097 aa).

Disordered regions lie at residues 1 to 22, 74 to 168, 220 to 293, 321 to 358, and 400 to 436; these read MTTT…NNRI, SLRD…YRIG, NVRP…GFGE, GRSL…DSSS, and DSDL…LTEK. Polar residues predominate over residues 10–20; it reads RVASSSSTRNN. The segment covering 95–113 has biased composition (basic and acidic residues); the sequence is LPKKGDLVEGGRRSVDLKK. Residues 126–136 are compositionally biased toward polar residues; it reads PVVNFGTSKVT. A compositionally biased stretch (basic and acidic residues) spans 137 to 168; the sequence is PSDERSGPVSGERDSGRRVKREESSRKSYRIG. Residues 227–241 are compositionally biased toward gly residues; sequence YGGGGGGGNTRGCAG. Basic residues predominate over residues 245–259; it reads RPKRRKFRGTRRVRG. Basic and acidic residues-rich tracts occupy residues 281–291 and 332–345; these read VEKHDGEKEGF and KGGR…RNGS. Over residues 346 to 358 the composition is skewed to low complexity; sequence DKMMIQSDDDSSS. The segment covering 411 to 429 has biased composition (basic residues); sequence EKKHKKKSHVNARHRHRQQ. Position 472–479 (472–479) interacts with ATP; that stretch reads GPNGTGKT. Zn(2+)-binding residues include Cys-491, Cys-500, Cys-503, and Cys-506. A coiled-coil region spans residues 742-770; the sequence is KEDMEKLRQALKTLSEAEKQLRVSNDKLT. 3 disordered regions span residues 790-828, 913-932, and 956-1003; these read SSTA…DSRK, DPRN…DKSL, and VTES…SQSI. Composition is skewed to basic and acidic residues over residues 796-807 and 818-828; these read GGRESSDHHLDP and GLDRRRGDSRK. Positions 993–1003 are enriched in polar residues; it reads ASQSQNQSQSI.

It belongs to the DnaX/STICHEL family.

This is Protein STICHEL-like 3 from Arabidopsis thaliana (Mouse-ear cress).